The chain runs to 335 residues: DNA primase small subunit PriS (335 aa).

Catalysis depends on residues aspartate 96, aspartate 98, and aspartate 243.

The protein belongs to the eukaryotic-type primase small subunit family. As to quaternary structure, heterodimer of a small subunit (PriS) and a large subunit (PriL). Mg(2+) serves as cofactor. Mn(2+) is required as a cofactor.

Functionally, catalytic subunit of DNA primase, an RNA polymerase that catalyzes the synthesis of short RNA molecules used as primers for DNA polymerase during DNA replication. The small subunit contains the primase catalytic core and has DNA synthesis activity on its own. Binding to the large subunit stabilizes and modulates the activity, increasing the rate of DNA synthesis while decreasing the length of the DNA fragments, and conferring RNA synthesis capability. The DNA polymerase activity may enable DNA primase to also catalyze primer extension after primer synthesis. May also play a role in DNA repair. This chain is DNA primase small subunit PriS, found in Archaeoglobus fulgidus (strain ATCC 49558 / DSM 4304 / JCM 9628 / NBRC 100126 / VC-16).